The chain runs to 205 residues: Thiamine-phosphate synthase (205 aa).

4-amino-2-methyl-5-(diphosphooxymethyl)pyrimidine is bound by residues 37-41 (QVREK) and Asn-69. Mg(2+) is bound by residues Asp-70 and Asp-89. A 4-amino-2-methyl-5-(diphosphooxymethyl)pyrimidine-binding site is contributed by Ser-108. Residue 134–136 (TGS) coordinates 2-[(2R,5Z)-2-carboxy-4-methylthiazol-5(2H)-ylidene]ethyl phosphate. Lys-137 contacts 4-amino-2-methyl-5-(diphosphooxymethyl)pyrimidine. 2-[(2R,5Z)-2-carboxy-4-methylthiazol-5(2H)-ylidene]ethyl phosphate-binding positions include Gly-165 and 185 to 186 (IS).

Belongs to the thiamine-phosphate synthase family. The cofactor is Mg(2+).

The catalysed reaction is 2-[(2R,5Z)-2-carboxy-4-methylthiazol-5(2H)-ylidene]ethyl phosphate + 4-amino-2-methyl-5-(diphosphooxymethyl)pyrimidine + 2 H(+) = thiamine phosphate + CO2 + diphosphate. It catalyses the reaction 2-(2-carboxy-4-methylthiazol-5-yl)ethyl phosphate + 4-amino-2-methyl-5-(diphosphooxymethyl)pyrimidine + 2 H(+) = thiamine phosphate + CO2 + diphosphate. The enzyme catalyses 4-methyl-5-(2-phosphooxyethyl)-thiazole + 4-amino-2-methyl-5-(diphosphooxymethyl)pyrimidine + H(+) = thiamine phosphate + diphosphate. It functions in the pathway cofactor biosynthesis; thiamine diphosphate biosynthesis; thiamine phosphate from 4-amino-2-methyl-5-diphosphomethylpyrimidine and 4-methyl-5-(2-phosphoethyl)-thiazole: step 1/1. Its function is as follows. Condenses 4-methyl-5-(beta-hydroxyethyl)thiazole monophosphate (THZ-P) and 2-methyl-4-amino-5-hydroxymethyl pyrimidine pyrophosphate (HMP-PP) to form thiamine monophosphate (TMP). The chain is Thiamine-phosphate synthase from Clostridium botulinum (strain Loch Maree / Type A3).